The sequence spans 394 residues: Metallophosphoesterase 1 (394 aa).

The chain crosses the membrane as a helical span at residues 27 to 47; it reads TVVVISVLLFCEYFIYYLVLF. Positions 74, 116, 154, 247, 301, and 303 each coordinate a divalent metal cation. Residues 354–374 traverse the membrane as a helical segment; the sequence is TVLTTYCAAAAFLLVLILAHF.

Belongs to the metallophosphoesterase superfamily. MPPE1 family. As to quaternary structure, interacts with GPI-anchor proteins (via the GPI portion). Interacts with TMED10. The cofactor is Mn(2+).

The protein resides in the endoplasmic reticulum-Golgi intermediate compartment membrane. In terms of biological role, metallophosphoesterase that catalyzes the removal of a side-chain ethanolamine-phosphate (EtNP) from the second mannose of the GPI-anchor protein intermediate. Participates in the glycan remodeling steps of GPI-anchor maturation to allow an efficient transport of GPI-anchor proteins from the endoplasmic reticulum to the Golgi. The polypeptide is Metallophosphoesterase 1 (Rattus norvegicus (Rat)).